We begin with the raw amino-acid sequence, 482 residues long: MMKVHIITLGCPKNQVDSEGMSGILAAQGHTLAASADDADVVIVNTCSFIAAAREETLAVLRDVAACKTPEQRLVAAGCMAESHRAIVAATPGVDATLGTREWTRIAEVVETFQPAATMAPLNAASAREIIPLTSAGVPSPAPHDLSVPGAYADWRTAPIRRRAVGPSAYLKISDGCNLRCAFCTIPSFKGDMRSKAIGAILGEAQELAAAGVKEIVLVAQHLTDYGRDLGLKDGLAILLDEICAVLPENVWVRLMYAYPHGIGERLIATMARHPQICHYLDMPLQHAHPETLRRMRRPPDTDRTRRLIDDLRAAIPDIAIRSTFIVGFPGETNTEFRALLAFLEDVQFDRVGVFRYSREPGTPAAALPDQLAPRIIERRWHEIMRLQQRISRERNRRWLGRVVRVLVEGQGQTDDGRMLSVGRSFRDAPEVDGQVLFWGAATPGTFVDVRVTQALDYDLWGDVVGVLDGEERIVKCIQSVG.

One can recognise an MTTase N-terminal domain in the interval 2 to 115 (MKVHIITLGC…IAEVVETFQP (114 aa)). 6 residues coordinate [4Fe-4S] cluster: cysteine 11, cysteine 47, cysteine 79, cysteine 177, cysteine 181, and cysteine 184. The 232-residue stretch at 163-394 (RAVGPSAYLK…MRLQQRISRE (232 aa)) folds into the Radical SAM core domain. The region spanning 397–466 (RRWLGRVVRV…DYDLWGDVVG (70 aa)) is the TRAM domain.

This sequence belongs to the methylthiotransferase family. RimO subfamily. The cofactor is [4Fe-4S] cluster.

Its subcellular location is the cytoplasm. It catalyses the reaction L-aspartate(89)-[ribosomal protein uS12]-hydrogen + (sulfur carrier)-SH + AH2 + 2 S-adenosyl-L-methionine = 3-methylsulfanyl-L-aspartate(89)-[ribosomal protein uS12]-hydrogen + (sulfur carrier)-H + 5'-deoxyadenosine + L-methionine + A + S-adenosyl-L-homocysteine + 2 H(+). In terms of biological role, catalyzes the methylthiolation of an aspartic acid residue of ribosomal protein uS12. The chain is Ribosomal protein uS12 methylthiotransferase RimO from Roseiflexus castenholzii (strain DSM 13941 / HLO8).